Consider the following 673-residue polypeptide: Poly(glycerol-phosphate) alpha-glucosyltransferase (673 aa).

The residue at position 2 (serine 2) is a Phosphoserine.

This sequence belongs to the glycosyltransferase group 1 family. Glycosyltransferase 4 subfamily.

Its subcellular location is the cytoplasm. The enzyme catalyses 4-O-{[(2R)-1-glycerylphospho](n)-(2R)-1-glycerylphospho}-N-acetyl-beta-D-mannosaminyl-(1-&gt;4)-N-acetyl-alpha-D-glucosaminyl undecaprenyl diphosphate + n UDP-alpha-D-glucose = 4-O-{[(2R)-2-alpha-D-glucosyl-1-glycerylphospho](n)-(2R)-1-glycerylphospho}-N-acetyl-beta-D-mannosaminyl-(1-&gt;4)-N-acetyl-alpha-D-glucosaminyl undecaprenyl diphosphate + n UDP + n H(+). Its pathway is cell wall biogenesis; poly(glycerol phosphate) teichoic acid biosynthesis. Its function is as follows. Catalyzes the addition of glucose to the C-2 hydroxy group of the glycerol units in teichoic acid. This chain is Poly(glycerol-phosphate) alpha-glucosyltransferase (tagE), found in Bacillus subtilis (strain 168).